We begin with the raw amino-acid sequence, 446 residues long: Probable D-serine dehydratase (446 aa).

Lys-116 is modified (N6-(pyridoxal phosphate)lysine).

It belongs to the serine/threonine dehydratase family. DsdA subfamily. Pyridoxal 5'-phosphate is required as a cofactor.

The catalysed reaction is D-serine = pyruvate + NH4(+). The chain is Probable D-serine dehydratase from Bacillus thuringiensis (strain Al Hakam).